The primary structure comprises 186 residues: Ribosome-recycling factor (186 aa).

This sequence belongs to the RRF family.

The protein resides in the cytoplasm. Responsible for the release of ribosomes from messenger RNA at the termination of protein biosynthesis. May increase the efficiency of translation by recycling ribosomes from one round of translation to another. This Pediococcus pentosaceus (strain ATCC 25745 / CCUG 21536 / LMG 10740 / 183-1w) protein is Ribosome-recycling factor.